Reading from the N-terminus, the 341-residue chain is Very-long-chain 3-oxoacyl-CoA reductase (341 aa).

A helical transmembrane segment spans residues 17-37 (ALYGALLLGVYKLTTFALSLV). NADP(+) contacts are provided by V63, D117, N144, Y218, K222, V251, and S253. Residue Y218 is the Proton donor of the active site. Residue K222 is the Lowers pKa of active site Tyr of the active site.

It belongs to the short-chain dehydrogenases/reductases (SDR) family.

The protein localises to the endoplasmic reticulum membrane. The catalysed reaction is a very-long-chain (3R)-3-hydroxyacyl-CoA + NADP(+) = a very-long-chain 3-oxoacyl-CoA + NADPH + H(+). It functions in the pathway lipid metabolism; fatty acid biosynthesis. In terms of biological role, component of the microsomal membrane bound fatty acid elongation system, which produces the 26-carbon very long-chain fatty acids (VLCFA) from palmitate. Catalyzes the reduction of the 3-ketoacyl-CoA intermediate that is formed in each cycle of fatty acid elongation. VLCFAs serve as precursors for ceramide and sphingolipids. The chain is Very-long-chain 3-oxoacyl-CoA reductase from Meyerozyma guilliermondii (strain ATCC 6260 / CBS 566 / DSM 6381 / JCM 1539 / NBRC 10279 / NRRL Y-324) (Yeast).